The chain runs to 353 residues: Guanine nucleotide-binding protein G(q) subunit alpha (353 aa).

S-palmitoyl cysteine attachment occurs at residues C3 and C4. The 322-residue stretch at R32–V353 folds into the G-alpha domain. Residues K35–T48 form a G1 motif region. Residues G40–S47, L174–T180, D199–Q203, N268–D271, and A325 contribute to the GTP site. Mg(2+) is bound by residues S47 and T180. Positions D172–T180 are G2 motif. Positions F195 to R204 are G3 motif. Positions I264–D271 are G4 motif. The tract at residues T323–T328 is G5 motif.

Belongs to the G-alpha family. G(q) subfamily. G proteins are composed of 3 units; alpha, beta and gamma. The alpha chain contains the guanine nucleotide binding site.

Guanine nucleotide-binding proteins (G proteins) are involved as modulators or transducers in various transmembrane signaling systems. The sequence is that of Guanine nucleotide-binding protein G(q) subunit alpha from Homarus americanus (American lobster).